The chain runs to 402 residues: Probable tRNA pseudouridine synthase tag-124 (402 aa).

The active-site Nucleophile is Asp85. Residues 383–402 form a disordered region; that stretch reads SKKEKMAEKKKNGEESSDKL.

The protein belongs to the tRNA pseudouridine synthase TruA family.

It carries out the reaction a uridine in tRNA = a pseudouridine in tRNA. In terms of biological role, formation of pseudouridine at position 38 and 39 in the anticodon stem and loop of transfer RNAs. In Caenorhabditis elegans, this protein is Probable tRNA pseudouridine synthase tag-124 (tag-124).